The following is a 448-amino-acid chain: Trigger factor (448 aa).

Positions Gly172–Pro257 constitute a PPIase FKBP-type domain.

Belongs to the FKBP-type PPIase family. Tig subfamily.

Its subcellular location is the cytoplasm. The catalysed reaction is [protein]-peptidylproline (omega=180) = [protein]-peptidylproline (omega=0). Involved in protein export. Acts as a chaperone by maintaining the newly synthesized protein in an open conformation. Functions as a peptidyl-prolyl cis-trans isomerase. This Burkholderia vietnamiensis (strain G4 / LMG 22486) (Burkholderia cepacia (strain R1808)) protein is Trigger factor.